A 467-amino-acid chain; its full sequence is ATP synthase subunit beta (467 aa).

156–163 (GGAGVGKT) is a binding site for ATP.

It belongs to the ATPase alpha/beta chains family. In terms of assembly, F-type ATPases have 2 components, CF(1) - the catalytic core - and CF(0) - the membrane proton channel. CF(1) has five subunits: alpha(3), beta(3), gamma(1), delta(1), epsilon(1). CF(0) has three main subunits: a(1), b(2) and c(9-12). The alpha and beta chains form an alternating ring which encloses part of the gamma chain. CF(1) is attached to CF(0) by a central stalk formed by the gamma and epsilon chains, while a peripheral stalk is formed by the delta and b chains.

It is found in the cell inner membrane. The catalysed reaction is ATP + H2O + 4 H(+)(in) = ADP + phosphate + 5 H(+)(out). In terms of biological role, produces ATP from ADP in the presence of a proton gradient across the membrane. The catalytic sites are hosted primarily by the beta subunits. The protein is ATP synthase subunit beta of Cupriavidus metallidurans (strain ATCC 43123 / DSM 2839 / NBRC 102507 / CH34) (Ralstonia metallidurans).